The primary structure comprises 135 residues: Large ribosomal subunit protein uL16c (135 aa).

The protein belongs to the universal ribosomal protein uL16 family. Part of the 50S ribosomal subunit.

It localises to the plastid. This Epifagus virginiana (Beechdrops) protein is Large ribosomal subunit protein uL16c.